Consider the following 470-residue polypeptide: Retinoic acid receptor RXR-gamma (470 aa).

Positions 1-145 are modulating; it reads MHLATETAPS…NSPGALTKHI (145 aa). NR C4-type zinc fingers lie at residues 146–166 and 182–206; these read CAIC…CEGC and CRDS…YQKC. The nuclear receptor DNA-binding region spans 146–211; that stretch reads CAICGDRSSG…RYQKCLAMGM (66 aa). The hinge stretch occupies residues 212-235; the sequence is KREAVQEERQRSREKSDTEAESTS. The span at 217–229 shows a compositional bias: basic and acidic residues; it reads QEERQRSREKSDT. The disordered stretch occupies residues 217–242; sequence QEERQRSREKSDTEAESTSSTSEEMP. One can recognise an NR LBD domain in the interval 238 to 466; it reads SEEMPVERIL…TFLMEMLETP (229 aa).

This sequence belongs to the nuclear hormone receptor family. NR2 subfamily. As to quaternary structure, homodimer. Heterodimer; with a rar molecule. Binds DNA preferentially as a rar/rxr heterodimer.

It is found in the nucleus. Functionally, receptor for retinoic acid. Retinoic acid receptors bind as heterodimers to their target response elements in response to their ligands, all-trans or 9-cis retinoic acid, and regulate gene expression in various biological processes. The rar/rxr heterodimers bind to the retinoic acid response elements (RARE) composed of tandem 5'-AGGTCA-3' sites known as DR1-DR5. The high affinity ligand for rxrs is 9-cis retinoic acid. The polypeptide is Retinoic acid receptor RXR-gamma (rxrg) (Xenopus laevis (African clawed frog)).